A 55-amino-acid chain; its full sequence is Conotoxin Cal22c (55 aa).

Positions 1–5 are excised as a propeptide; that stretch reads GRPSA.

Contains 4 disulfide bonds. As to expression, expressed by the venom duct.

The protein localises to the secreted. Its function is as follows. Probable neurotoxin with unknown target. Possibly targets ion channels. In Californiconus californicus (California cone), this protein is Conotoxin Cal22c.